Consider the following 433-residue polypeptide: Pyroglutamylated RF-amide peptide receptor (433 aa).

Residues 1 to 46 are Extracellular-facing; the sequence is MQALNITAEQFSRLLSAHNLTREQFIHRYGLRPLVYTPELPARAKL. 2 N-linked (GlcNAc...) asparagine glycosylation sites follow: Asn5 and Asn19. A helical membrane pass occupies residues 47–67; sequence AFALAGALIFALALFGNSLVI. The Cytoplasmic portion of the chain corresponds to 68-81; it reads YVVTRSKAMRTVTN. A helical membrane pass occupies residues 82–102; that stretch reads IFICSLALSDLLIAFFCIPVT. The Extracellular segment spans residues 103 to 120; the sequence is MLQNISDKWLGGAFICKM. The helical transmembrane segment at 121-141 threads the bilayer; that stretch reads VPFVQSTAVVTEILTMTCIAV. At 142 to 162 the chain is on the cytoplasmic side; sequence ERHQGLIHPFKMKWQYTTRRA. A helical transmembrane segment spans residues 163–183; sequence FTILGVVWLAAIIVGSPMWHV. At 184-212 the chain is on the extracellular side; it reads QRLEIKYDFLYEKEHVCCLEEWASPMHQR. Residues 213-233 form a helical membrane-spanning segment; sequence IYTTFILVILFLLPLVVMLVL. The Cytoplasmic portion of the chain corresponds to 234-271; that stretch reads YSKIGYELWIKKRVGDSSALQTIHGKEMSKIARKKKRA. A helical membrane pass occupies residues 272–292; the sequence is VVMMVTVVALFAACWAPFHVV. Topologically, residues 293–313 are extracellular; that stretch reads HMMVEYSNFEKEYDDVTIKMV. Residues 314 to 334 traverse the membrane as a helical segment; that stretch reads FAVAQTIGFFNSICNPFVYAF. Topologically, residues 335–433 are cytoplasmic; that stretch reads MNENFKKNFL…NSTFGSGHEL (99 aa).

It belongs to the G-protein coupled receptor 1 family. In terms of tissue distribution, expressed widely in the brain with high levels in the cortex and hypothalamus, and moderate levels in the brain stem, caudate nucleus, midbrain hippocampus, thalamus, trigeminal ganglia and spinal cord. Particularly strong expression detected in the mitral cell layer of the olfactory bulb, accessory olfactory bulb, island of Calleja and nucleus of the solitary tract. In peripheral tissues, expressed at moderate levels in the eye, liver, kidney, pituitary gland, testis and thymus.

The protein localises to the cell membrane. Its function is as follows. Receptor for the orexigenic neuropeptide QRFP. The activity of this receptor is mediated by G proteins that modulate adenylate cyclase activity and intracellular calcium levels. In Mus musculus (Mouse), this protein is Pyroglutamylated RF-amide peptide receptor (Qrfpr).